The chain runs to 477 residues: MTPTGAGLKATIFCILTWVSLTAGDRVYIHPFHLLYYSKSTCAQLENPSVETLPEPTFEPVPIQAKTSPVDEKTLRDKLVLATEKLEAEDRQRAAQVAMIANFMGFRMYKMLSEARGVASGAVLSPPALFGTLVSFYLGSLDPTASQLQVLLGVPVKEGDCTSRLDGHKVLTALQAVQGLLVTQGGSSSQTPLLQSTVVGLFTAPGLRLKQPFVESLGPFTPAIFPRSLDLSTDPVLAAQKINRFVQAVTGWKMNLPLEGVSTDSTLFFNTYVHFQGKMRGFSQLTGLHEFWVDNSTSVSVPMLSGTGNFQHWSDAQNNFSVTRVPLGESVTLLLIQPQCASDLDRVEVLVFQHDFLTWIKNPPPRAIRLTLPQLEIRGSYNLQDLLAQAKLSTLLGAEANLGKMGDTNPRVGEVLNSILLELQAGEEEQPTESAQQPGSPEVLDVTLSSPFLFAIYERDSGALHFLGRVDNPQNVV.

The signal sequence occupies residues 1-24; it reads MTPTGAGLKATIFCILTWVSLTAG. An intrachain disulfide couples Cys-42 to Cys-161. N-linked (GlcNAc...) asparagine glycans are attached at residues Asn-295 and Asn-319.

It belongs to the serpin family. Post-translationally, in response to low blood pressure, the enzyme renin/REN cleaves angiotensinogen to produce angiotensin-1. Angiotensin-1 is a substrate of ACE (angiotensin converting enzyme) that removes a dipeptide to yield the physiologically active peptide angiotensin-2. Angiotensin-1 and angiotensin-2 can be further processed to generate angiotensin-3, angiotensin-4. Angiotensin 1-9 is cleaved from angiotensin-1 by ACE2 and can be further processed by ACE to produce angiotensin 1-7, angiotensin 1-5 and angiotensin 1-4. Angiotensin 1-7 has also been proposed to be cleaved from angiotensin-2 by ACE2 or from angiotensin-1 by MME (neprilysin). The disulfide bond is labile. Angiotensinogen is present in the circulation in a near 40:60 ratio with the oxidized disulfide-bonded form, which preferentially interacts with receptor-bound renin.

Its subcellular location is the secreted. In terms of biological role, essential component of the renin-angiotensin system (RAS), a potent regulator of blood pressure, body fluid and electrolyte homeostasis. Functionally, acts directly on vascular smooth muscle as a potent vasoconstrictor, affects cardiac contractility and heart rate through its action on the sympathetic nervous system, and alters renal sodium and water absorption through its ability to stimulate the zona glomerulosa cells of the adrenal cortex to synthesize and secrete aldosterone. Acts by binding to angiotensin receptors AGTR1 and AGTR2. Also binds the DEAR/FBXW7-AS1 receptor. Stimulates aldosterone release. Its function is as follows. Is a ligand for the G-protein coupled receptor MAS1. Has vasodilator and antidiuretic effects. Has an antithrombotic effect that involves MAS1-mediated release of nitric oxide from platelets. This chain is Angiotensinogen (Agt), found in Rattus norvegicus (Rat).